Here is an 870-residue protein sequence, read N- to C-terminus: S-linalool synthase (870 aa).

D547, D551, N689, S693, and E697 together coordinate Mg(2+). Positions D547 to D551 match the DDXXD motif motif.

Belongs to the terpene synthase family. The cofactor is Mg(2+). Mn(2+) is required as a cofactor. Highly expressed in cells of the transmitting tract of the stigma and style and in the epidermal cells of petals, as well as in stamens.

The enzyme catalyses (2E)-geranyl diphosphate + H2O = (S)-linalool + diphosphate. Involved in the biosynthesis of the acyclic monoterpene S-linalool, a major component of the strong sweet scent of the C.breweri flowers. The polypeptide is S-linalool synthase (LIS) (Clarkia breweri (Fairy fans)).